Consider the following 70-residue polypeptide: Neuropeptide SIFamide (70 aa).

The signal sequence occupies residues 1–22; the sequence is MRFIVALCLFAIVMCIIHKAEG. Phe-34 carries the post-translational modification Phenylalanine amide. Positions 38–70 are excised as a propeptide; that stretch reads GVVEYDTTGRALSALCEIASETCQAWYQTLENK.

Expressed in antennal lobe (AL) and gnathal ganglion (GNG) with expression detected in most animals (at protein level). Not expressed in corpora cardiaca (CC) and corpora allata (CA) (at protein level).

It is found in the secreted. Ligand for the neuropeptide SIFamide receptor. The chain is Neuropeptide SIFamide from Agrotis ipsilon (Black cutworm moth).